A 216-amino-acid polypeptide reads, in one-letter code: MKLFIDTANVDDIREVASWGVLSGVTTNPSLVAKEGRDFMQVLREILEIVDGPISAEVISLQADDMVEEARQYYELHKNIVIKLPMTAEGLKACARLSAKGVRCNMTLIFSPNQALLCARAGAAFVSPFVGRLDDISTDGIQLIRDTAEIFDLHGIDTEIIAASIRTPGQVVEAAKAGAHIATIPPKVFHQMLKHPLTDSGIERFLKDWEAAKGRV.

Catalysis depends on lysine 83, which acts as the Schiff-base intermediate with substrate.

It belongs to the transaldolase family. Type 3B subfamily.

It is found in the cytoplasm. It catalyses the reaction D-sedoheptulose 7-phosphate + D-glyceraldehyde 3-phosphate = D-erythrose 4-phosphate + beta-D-fructose 6-phosphate. The protein operates within carbohydrate degradation; pentose phosphate pathway; D-glyceraldehyde 3-phosphate and beta-D-fructose 6-phosphate from D-ribose 5-phosphate and D-xylulose 5-phosphate (non-oxidative stage): step 2/3. Transaldolase is important for the balance of metabolites in the pentose-phosphate pathway. The sequence is that of Probable transaldolase from Symbiobacterium thermophilum (strain DSM 24528 / JCM 14929 / IAM 14863 / T).